Consider the following 453-residue polypeptide: tRNA modification GTPase MnmE (453 aa).

(6S)-5-formyl-5,6,7,8-tetrahydrofolate-binding residues include R22, E79, and K119. The region spanning 215 to 376 is the TrmE-type G domain; the sequence is GMKVVIAGRP…LRNHLKECMG (162 aa). N225 is a K(+) binding site. Residues 225 to 230, 244 to 250, 269 to 272, and 334 to 337 contribute to the GTP site; these read NAGKSS, TDIAGTT, DTAG, and NKAD. Mg(2+) is bound at residue S229. Positions 244, 246, and 249 each coordinate K(+). Residue T250 participates in Mg(2+) binding. K453 serves as a coordination point for (6S)-5-formyl-5,6,7,8-tetrahydrofolate.

This sequence belongs to the TRAFAC class TrmE-Era-EngA-EngB-Septin-like GTPase superfamily. TrmE GTPase family. Homodimer. Heterotetramer of two MnmE and two MnmG subunits. The cofactor is K(+).

The protein localises to the cytoplasm. In terms of biological role, exhibits a very high intrinsic GTPase hydrolysis rate. Involved in the addition of a carboxymethylaminomethyl (cmnm) group at the wobble position (U34) of certain tRNAs, forming tRNA-cmnm(5)s(2)U34. The chain is tRNA modification GTPase MnmE from Vibrio parahaemolyticus serotype O3:K6 (strain RIMD 2210633).